The primary structure comprises 116 residues: Ribonuclease P protein component (116 aa).

This sequence belongs to the RnpA family. Consists of a catalytic RNA component (M1 or rnpB) and a protein subunit.

It catalyses the reaction Endonucleolytic cleavage of RNA, removing 5'-extranucleotides from tRNA precursor.. RNaseP catalyzes the removal of the 5'-leader sequence from pre-tRNA to produce the mature 5'-terminus. It can also cleave other RNA substrates such as 4.5S RNA. The protein component plays an auxiliary but essential role in vivo by binding to the 5'-leader sequence and broadening the substrate specificity of the ribozyme. The polypeptide is Ribonuclease P protein component (Caldanaerobacter subterraneus subsp. tengcongensis (strain DSM 15242 / JCM 11007 / NBRC 100824 / MB4) (Thermoanaerobacter tengcongensis)).